We begin with the raw amino-acid sequence, 655 residues long: MPRINFIFGIHNHQPLGNFGWVMEEAYEKAYRPFLEILEEYPNMKVAIHISGILVEWLEENKPDYIDLLKSLVRKGQVEIVVAGFYEPVLAAIPKEDRLEQIYLLKEWAKKIGYDAKGLWLTERVWQPELVKTLREAGIEYVVVDDYHFMSAGLSKDQLFWPYYTEDGGEVITVFPIDEKLRYLIPFRPVDKVISYLHSLASEDESKVAVFHDDGEKFGIWPMTYEWVYEKGWLREFFDRVSSDEAINIMLYSEYLQKFKPKGLVYLPIASYFEMSEWSLPAQQAKLFVEFVEKLKELNMFERYRVFVRGGIWKNFFYKYPEANYMHKRMLMLSRLLRDNPSARRFVLRAQCNDAYWHGVFGGIYLPHLRRAIWSNLIKAHSHLEPKNKILDVDFDGREEVFLENDNFIIVVKPHYGGSIFELSSKRRAVNYADVIARRWEHYHNLGESESDDNENQEGVSSIHEIGKRIPEDIRKELAYDRYRRGILQDHFFSANETLDRYRLAKYWELGDFIEGVYNYEVGNGLVLWRRGKVLNVTVDVKKSIEVREDGFSVRYTVLSEEDIEALFGIELNIAVHSIKESPEELIGKRIKVNDKYGVGEFEIVLNKKARIWKYPVKTLSQSEAGWDYIQQGVSYTIIYPINGRLDIELYFREL.

The active-site Nucleophile is the Glu123. The Proton donor role is filled by Asp214.

This sequence belongs to the glycosyl hydrolase 57 family.

It catalyses the reaction Endohydrolysis of (1-&gt;4)-alpha-D-glucosidic linkages in polysaccharides containing three or more (1-&gt;4)-alpha-linked D-glucose units.. This Pyrococcus abyssi (strain GE5 / Orsay) protein is Alpha-amylase (amyA).